Reading from the N-terminus, the 258-residue chain is Snake venom serine protease 3 (258 aa).

The N-terminal stretch at 1–18 is a signal peptide; that stretch reads MVLIRVLANLLILQLSYA. Residues 19–24 constitute a propeptide that is removed on maturation; it reads QKSSEL. Positions 25–249 constitute a Peptidase S1 domain; it reads VIGGDECNIN…YTDWIQSIIA (225 aa). 6 cysteine pairs are disulfide-bonded: Cys31–Cys163, Cys50–Cys66, Cys98–Cys256, Cys142–Cys210, Cys174–Cys189, and Cys200–Cys225. Asn44 carries an N-linked (GlcNAc...) asparagine glycan. Catalysis depends on His65, which acts as the Charge relay system. Asn103 is a glycosylation site (N-linked (GlcNAc...) asparagine). The Charge relay system role is filled by Asp110. Residues Asn117, Asn121, and Asn154 are each glycosylated (N-linked (GlcNAc...) asparagine). Ser204 acts as the Charge relay system in catalysis. N-linked (GlcNAc...) asparagine glycosylation is present at Asn251.

This sequence belongs to the peptidase S1 family. Snake venom subfamily. As to quaternary structure, monomer. As to expression, expressed by the venom gland.

The protein localises to the secreted. Snake venom serine protease that may act in the hemostasis system of the prey. This is Snake venom serine protease 3 (TLG3) from Craspedocephalus gramineus (Bamboo pit viper).